Reading from the N-terminus, the 409-residue chain is Gamma-glutamyl phosphate reductase (409 aa).

The protein belongs to the gamma-glutamyl phosphate reductase family.

It is found in the cytoplasm. The enzyme catalyses L-glutamate 5-semialdehyde + phosphate + NADP(+) = L-glutamyl 5-phosphate + NADPH + H(+). It functions in the pathway amino-acid biosynthesis; L-proline biosynthesis; L-glutamate 5-semialdehyde from L-glutamate: step 2/2. In terms of biological role, catalyzes the NADPH-dependent reduction of L-glutamate 5-phosphate into L-glutamate 5-semialdehyde and phosphate. The product spontaneously undergoes cyclization to form 1-pyrroline-5-carboxylate. In Koribacter versatilis (strain Ellin345), this protein is Gamma-glutamyl phosphate reductase.